The following is a 98-amino-acid chain: MIPTYMNIMLAFTISLLGMLTYRSHLVASLLCLEGMMMSLFIMTTLIASNTHSPLINIMPIILLVFAACEAAVGLALLISISNTYGLDYIHNLNLLQC.

A run of 3 helical transmembrane segments spans residues 1–21 (MIPT…GMLT), 27–47 (VASL…TTLI), and 61–81 (IILL…LISI).

This sequence belongs to the complex I subunit 4L family. In terms of assembly, core subunit of respiratory chain NADH dehydrogenase (Complex I) which is composed of 45 different subunits.

The protein localises to the mitochondrion inner membrane. The catalysed reaction is a ubiquinone + NADH + 5 H(+)(in) = a ubiquinol + NAD(+) + 4 H(+)(out). In terms of biological role, core subunit of the mitochondrial membrane respiratory chain NADH dehydrogenase (Complex I) which catalyzes electron transfer from NADH through the respiratory chain, using ubiquinone as an electron acceptor. Part of the enzyme membrane arm which is embedded in the lipid bilayer and involved in proton translocation. The protein is NADH-ubiquinone oxidoreductase chain 4L (MT-ND4L) of Macaca nigra (Celebes black macaque).